Consider the following 860-residue polypeptide: DNA mismatch repair protein MutS (860 aa).

Gly-607–Ser-614 lines the ATP pocket.

The protein belongs to the DNA mismatch repair MutS family.

This protein is involved in the repair of mismatches in DNA. It is possible that it carries out the mismatch recognition step. This protein has a weak ATPase activity. The polypeptide is DNA mismatch repair protein MutS (Listeria monocytogenes serotype 4a (strain HCC23)).